The chain runs to 316 residues: Ribosomal RNA small subunit methyltransferase A (316 aa).

Asn-33, Val-35, Gly-60, Glu-81, Asp-110, and Asn-133 together coordinate S-adenosyl-L-methionine.

The protein belongs to the class I-like SAM-binding methyltransferase superfamily. rRNA adenine N(6)-methyltransferase family. RsmA subfamily.

The protein localises to the cytoplasm. The catalysed reaction is adenosine(1518)/adenosine(1519) in 16S rRNA + 4 S-adenosyl-L-methionine = N(6)-dimethyladenosine(1518)/N(6)-dimethyladenosine(1519) in 16S rRNA + 4 S-adenosyl-L-homocysteine + 4 H(+). Functionally, specifically dimethylates two adjacent adenosines (A1518 and A1519) in the loop of a conserved hairpin near the 3'-end of 16S rRNA in the 30S particle. May play a critical role in biogenesis of 30S subunits. This Corynebacterium jeikeium (strain K411) protein is Ribosomal RNA small subunit methyltransferase A.